The chain runs to 289 residues: Shikimate dehydrogenase (NADP(+)) (289 aa).

Shikimate contacts are provided by residues 22–24 and Thr-69; that span reads SRS. Lys-73 acts as the Proton acceptor in catalysis. Glu-85 serves as a coordination point for NADP(+). Residues Asn-94 and Asp-109 each contribute to the shikimate site. Residues 134 to 138, 158 to 163, and Ile-226 each bind NADP(+); these read GAGGA and NRTLSR. Residue Tyr-228 participates in shikimate binding. Gly-249 contributes to the NADP(+) binding site.

Belongs to the shikimate dehydrogenase family. In terms of assembly, homodimer.

It carries out the reaction shikimate + NADP(+) = 3-dehydroshikimate + NADPH + H(+). It functions in the pathway metabolic intermediate biosynthesis; chorismate biosynthesis; chorismate from D-erythrose 4-phosphate and phosphoenolpyruvate: step 4/7. Its function is as follows. Involved in the biosynthesis of the chorismate, which leads to the biosynthesis of aromatic amino acids. Catalyzes the reversible NADPH linked reduction of 3-dehydroshikimate (DHSA) to yield shikimate (SA). The protein is Shikimate dehydrogenase (NADP(+)) of Brucella canis (strain ATCC 23365 / NCTC 10854 / RM-666).